The chain runs to 570 residues: Arginine--tRNA ligase (570 aa).

The 'HIGH' region motif lies at alanine 127–histidine 137.

It belongs to the class-I aminoacyl-tRNA synthetase family. As to quaternary structure, monomer.

Its subcellular location is the cytoplasm. The enzyme catalyses tRNA(Arg) + L-arginine + ATP = L-arginyl-tRNA(Arg) + AMP + diphosphate. The protein is Arginine--tRNA ligase of Neorickettsia sennetsu (strain ATCC VR-367 / Miyayama) (Ehrlichia sennetsu).